A 260-amino-acid chain; its full sequence is Proteasome subunit alpha (260 aa).

The protein belongs to the peptidase T1A family. In terms of assembly, the 20S proteasome core is composed of 14 alpha and 14 beta subunits that assemble into four stacked heptameric rings, resulting in a barrel-shaped structure. The two inner rings, each composed of seven catalytic beta subunits, are sandwiched by two outer rings, each composed of seven alpha subunits. The catalytic chamber with the active sites is on the inside of the barrel. Has a gated structure, the ends of the cylinder being occluded by the N-termini of the alpha-subunits. Is capped at one or both ends by the proteasome regulatory ATPase, PAN.

Its subcellular location is the cytoplasm. Its activity is regulated as follows. The formation of the proteasomal ATPase PAN-20S proteasome complex, via the docking of the C-termini of PAN into the intersubunit pockets in the alpha-rings, triggers opening of the gate for substrate entry. Interconversion between the open-gate and close-gate conformations leads to a dynamic regulation of the 20S proteasome proteolysis activity. Its function is as follows. Component of the proteasome core, a large protease complex with broad specificity involved in protein degradation. The sequence is that of Proteasome subunit alpha from Thermococcus gammatolerans (strain DSM 15229 / JCM 11827 / EJ3).